Reading from the N-terminus, the 317-residue chain is tRNA dimethylallyltransferase (317 aa).

14–21 (GPTASGKS) provides a ligand contact to ATP. Residue 16–21 (TASGKS) coordinates substrate. Interaction with substrate tRNA regions lie at residues 39 to 42 (DSVL) and 163 to 167 (QRIQR).

It belongs to the IPP transferase family. As to quaternary structure, monomer. The cofactor is Mg(2+).

The enzyme catalyses adenosine(37) in tRNA + dimethylallyl diphosphate = N(6)-dimethylallyladenosine(37) in tRNA + diphosphate. Functionally, catalyzes the transfer of a dimethylallyl group onto the adenine at position 37 in tRNAs that read codons beginning with uridine, leading to the formation of N6-(dimethylallyl)adenosine (i(6)A). The sequence is that of tRNA dimethylallyltransferase from Xylella fastidiosa (strain M12).